Reading from the N-terminus, the 289-residue chain is Ribosomal protein L11 methyltransferase (289 aa).

Positions 142, 163, 185, and 226 each coordinate S-adenosyl-L-methionine.

It belongs to the methyltransferase superfamily. PrmA family.

The protein localises to the cytoplasm. The catalysed reaction is L-lysyl-[protein] + 3 S-adenosyl-L-methionine = N(6),N(6),N(6)-trimethyl-L-lysyl-[protein] + 3 S-adenosyl-L-homocysteine + 3 H(+). In terms of biological role, methylates ribosomal protein L11. The protein is Ribosomal protein L11 methyltransferase of Legionella pneumophila (strain Corby).